The chain runs to 481 residues: Thiol protease (481 aa).

Residues 169-481 (DLREQALSST…ENFWYIAYMY (313 aa)) enclose the Calpain catalytic domain. Active-site residues include Cys229, His406, and Asn426.

The protein belongs to the peptidase C2 family.

With respect to regulation, inactive below 20 degrees Celsius and pH 6.0. Inhibited by divalent cations. Its function is as follows. Thiol protease. Probably an important virulence factor. This is Thiol protease (tpr) from Porphyromonas gingivalis (strain ATCC BAA-308 / W83).